A 290-amino-acid polypeptide reads, in one-letter code: Ribonuclease HIII (290 aa).

One can recognise an RNase H type-2 domain in the interval 78–290 (LPLIGTDEVG…FKNTEKAKNA (213 aa)). The a divalent metal cation site is built by aspartate 84, glutamate 85, and aspartate 187.

The protein belongs to the RNase HII family. RnhC subfamily. Mn(2+) serves as cofactor. The cofactor is Mg(2+).

Its subcellular location is the cytoplasm. The enzyme catalyses Endonucleolytic cleavage to 5'-phosphomonoester.. Its function is as follows. Endonuclease that specifically degrades the RNA of RNA-DNA hybrids. This chain is Ribonuclease HIII, found in Streptococcus pneumoniae (strain CGSP14).